The following is a 66-amino-acid chain: MAKGKDVRGIVILQCTSCVRNDFNKESRGTSRYITQKNRHNTPSRLELRKFCPYCYKHTIHGEIKK.

It belongs to the bacterial ribosomal protein bL33 family.

Its subcellular location is the plastid. It localises to the chloroplast. This chain is Large ribosomal subunit protein bL33c, found in Liriodendron tulipifera (Tuliptree).